The sequence spans 389 residues: S-adenosylmethionine synthase (389 aa).

Histidine 15 contacts ATP. Aspartate 17 provides a ligand contact to Mg(2+). Residue glutamate 43 coordinates K(+). L-methionine contacts are provided by glutamate 56 and glutamine 99. Positions 99 to 109 are flexible loop; it reads QSPDIAQGVNE. Residues 166-168, 234-235, aspartate 243, 249-250, alanine 266, and lysine 270 each bind ATP; these read DAK, RF, and RK. Aspartate 243 serves as a coordination point for L-methionine. L-methionine is bound at residue lysine 274.

This sequence belongs to the AdoMet synthase family. As to quaternary structure, homotetramer; dimer of dimers. Mg(2+) serves as cofactor. Requires K(+) as cofactor.

It is found in the cytoplasm. The enzyme catalyses L-methionine + ATP + H2O = S-adenosyl-L-methionine + phosphate + diphosphate. It participates in amino-acid biosynthesis; S-adenosyl-L-methionine biosynthesis; S-adenosyl-L-methionine from L-methionine: step 1/1. In terms of biological role, catalyzes the formation of S-adenosylmethionine (AdoMet) from methionine and ATP. The overall synthetic reaction is composed of two sequential steps, AdoMet formation and the subsequent tripolyphosphate hydrolysis which occurs prior to release of AdoMet from the enzyme. The polypeptide is S-adenosylmethionine synthase (Chromobacterium violaceum (strain ATCC 12472 / DSM 30191 / JCM 1249 / CCUG 213 / NBRC 12614 / NCIMB 9131 / NCTC 9757 / MK)).